Here is a 546-residue protein sequence, read N- to C-terminus: Inosine-5'-monophosphate dehydrogenase (546 aa).

CBS domains follow at residues 135 to 197 (FILD…VTAI) and 198 to 254 (MSTD…PLAS). NAD(+) contacts are provided by residues 292–294 (DSS) and 342–344 (GMG). The K(+) site is built by glycine 344 and glycine 346. Position 347 (serine 347) interacts with IMP. A K(+)-binding site is contributed by cysteine 349. Residue cysteine 349 is the Thioimidate intermediate of the active site. IMP is bound by residues 382–384 (DGG), 405–406 (GG), and 430–434 (YRGMG). Catalysis depends on arginine 460, which acts as the Proton acceptor. Glutamine 472 contributes to the IMP binding site. Glutamate 531 and glycine 532 together coordinate K(+).

Belongs to the IMPDH/GMPR family. As to quaternary structure, homotetramer. K(+) is required as a cofactor.

The protein localises to the cytoplasm. The enzyme catalyses IMP + NAD(+) + H2O = XMP + NADH + H(+). Its pathway is purine metabolism; XMP biosynthesis via de novo pathway; XMP from IMP: step 1/1. Its activity is regulated as follows. Mycophenolic acid (MPA) is a non-competitive inhibitor that prevents formation of the closed enzyme conformation by binding to the same site as the amobile flap. In contrast, mizoribine monophosphate (MZP) is a competitive inhibitor that induces the closed conformation. MPA is a potent inhibitor of mammalian IMPDHs but a poor inhibitor of the bacterial enzymes. MZP is a more potent inhibitor of bacterial IMPDH. In terms of biological role, catalyzes the conversion of inosine 5'-phosphate (IMP) to xanthosine 5'-phosphate (XMP), the first committed and rate-limiting step in the de novo synthesis of guanine nucleotides, and therefore plays an important role in the regulation of cell growth. In Aspergillus fumigatus (strain ATCC MYA-4609 / CBS 101355 / FGSC A1100 / Af293) (Neosartorya fumigata), this protein is Inosine-5'-monophosphate dehydrogenase.